The sequence spans 207 residues: ATP synthase subunit 5, mitochondrial (207 aa).

Belongs to the ATPase delta chain family. In terms of assembly, F-type ATPases have 2 components, CF(1) - the catalytic core - and CF(0) - the membrane proton channel. CF(1) has five subunits: alpha(3), beta(3), gamma(1), delta(1), epsilon(1). CF(0) has three main subunits: a, b and c.

The protein resides in the mitochondrion. It is found in the mitochondrion inner membrane. In terms of biological role, mitochondrial membrane ATP synthase (F(1)F(0) ATP synthase or Complex V) produces ATP from ADP in the presence of a proton gradient across the membrane which is generated by electron transport complexes of the respiratory chain. F-type ATPases consist of two structural domains, F(1) - containing the extramembraneous catalytic core and F(0) - containing the membrane proton channel, linked together by a central stalk and a peripheral stalk. During catalysis, ATP synthesis in the catalytic domain of F(1) is coupled via a rotary mechanism of the central stalk subunits to proton translocation. Part of the complex F(0) domain and the peripheric stalk, which acts as a stator to hold the catalytic alpha(3)beta(3) subcomplex and subunit a/ATP6 static relative to the rotary elements. This is ATP synthase subunit 5, mitochondrial (ATP5) from Eremothecium gossypii (strain ATCC 10895 / CBS 109.51 / FGSC 9923 / NRRL Y-1056) (Yeast).